The primary structure comprises 733 residues: MEGFDDAGVFFSDNFGGDNQQDAQINLQAVKKKYKEFIRTFNEENFFYKYRDTLKRNYLNGRYFLEIEMEDLVGFDETLADKLNKQPTEHLEIFEEAAREVADEITAPRPEHEEHMHDIQILLSSNANPTNIRQLKSDCVSKLVKIAGIIVAASGISAKATRMSIQCLSCSTVIPNLKVNPGLEGYALPRKCNTEQAGRPKCPLDPFFIMPDKCKCVDFQTLKLQELPDFVPQGEIPRHLQLFCDRSLCERVVPGNRVLIQGIYSIRKVGKPSRRDGREKAVVGVRAPYMRVVGITVDSEGAGAISRYSNITSDEEEHFRRMAASGDIYERLSQSLAPSIFGSRDIKKAITCMLFGGSRKRLPDGLCRRGDINVLLLGDPGTAKSQLLKFVEKVAPIAVYTSGKGSSAAGLTASVMKDPQTRNFVMEGGAMVLADGGVVCIDEFDKMREDDRVAIHEAMEQQTISIAKAGITTTLNSRCSVLAAANSIFGRWDDTKGEENIDFMPTILSRFDMIFIVKDIHDESRDITLAKHIINVHLSSNKSAPSEPAEGEISLSTFKKYIHYCRTHCGPRLSEAAGEKLKSRYVLMRSGAGQQEKASDKRLSIPITVRQLEAVIRISESLAKIRLQPFATDEHVNEALRLFQVSTLDAAMTGSLAGAEGFTTEEDQETLNRIEKQLKRRFAIGSQVSEQNILQDFLRQKYEERTVMKVIHTMIRRGELQHRMQRKMLYRIC.

The MCM domain occupies 328–534 (IYERLSQSLA…RDITLAKHII (207 aa)). ADP is bound at residue arginine 368. The short motif at 509-512 (SRFD) is the Arginine finger element.

The protein belongs to the MCM family. Component of the Mcm2-7 complex. The complex forms a toroidal hexameric ring with the proposed subunit order Mcm2-Mcm6-Mcm4-Mcm7-Mcm3-Mcm5.

The protein resides in the nucleus. The protein localises to the cytoplasm. It localises to the cytosol. It catalyses the reaction ATP + H2O = ADP + phosphate + H(+). Acts as a component of the Mcm2-7 complex (Mcm complex) which is the putative replicative helicase essential for 'once per cell cycle' DNA replication initiation and elongation in eukaryotic cells. Core component of CDC45-MCM-GINS (CMG) helicase, the molecular machine that unwinds template DNA during replication, and around which the replisome is built. The active ATPase sites in the Mcm2-7 ring are formed through the interaction surfaces of two neighboring subunits such that a critical structure of a conserved arginine finger motif is provided in trans relative to the ATP-binding site of the Walker A box of the adjacent subunit. The six ATPase active sites, however, are likely to contribute differentially to the complex helicase activity. This is DNA replication licensing factor Mcm5 (Mcm5) from Drosophila melanogaster (Fruit fly).